Reading from the N-terminus, the 771-residue chain is Probable exo-1,4-beta-xylosidase bxlB (771 aa).

The N-terminal stretch at 1 to 25 (MVGLTPQHYGNAIALMTYLASTALA) is a signal peptide. Asn67 carries N-linked (GlcNAc...) asparagine glycosylation. Asp293 is a catalytic residue. Residues Asn305, Asn345, Asn423, Asn462, and Asn463 are each glycosylated (N-linked (GlcNAc...) asparagine).

Belongs to the glycosyl hydrolase 3 family.

It is found in the secreted. It carries out the reaction Hydrolysis of (1-&gt;4)-beta-D-xylans, to remove successive D-xylose residues from the non-reducing termini.. Its pathway is glycan degradation; xylan degradation. Its function is as follows. Xylan 1,4-beta-xylosidase involved in the hydrolysis of xylan, a major structural heterogeneous polysaccharide found in plant biomass representing the second most abundant polysaccharide in the biosphere, after cellulose. In Aspergillus clavatus (strain ATCC 1007 / CBS 513.65 / DSM 816 / NCTC 3887 / NRRL 1 / QM 1276 / 107), this protein is Probable exo-1,4-beta-xylosidase bxlB (bxlB).